The primary structure comprises 431 residues: Adenylosuccinate synthetase (431 aa).

GTP is bound by residues 12-18 (GDEGKGK) and 40-42 (GHT). Catalysis depends on aspartate 13, which acts as the Proton acceptor. Mg(2+) is bound by residues aspartate 13 and glycine 40. IMP contacts are provided by residues 13 to 16 (DEGK), 38 to 41 (NAGH), threonine 131, arginine 145, glutamine 225, threonine 240, and arginine 304. Histidine 41 serves as the catalytic Proton donor. 300–306 (VNTGRRR) lines the substrate pocket. Residues arginine 306, 332–334 (KLD), and 414–416 (STS) contribute to the GTP site.

Belongs to the adenylosuccinate synthetase family. In terms of assembly, homodimer. Mg(2+) is required as a cofactor.

It localises to the cytoplasm. It catalyses the reaction IMP + L-aspartate + GTP = N(6)-(1,2-dicarboxyethyl)-AMP + GDP + phosphate + 2 H(+). Its pathway is purine metabolism; AMP biosynthesis via de novo pathway; AMP from IMP: step 1/2. Functionally, plays an important role in the de novo pathway of purine nucleotide biosynthesis. Catalyzes the first committed step in the biosynthesis of AMP from IMP. This is Adenylosuccinate synthetase from Beijerinckia indica subsp. indica (strain ATCC 9039 / DSM 1715 / NCIMB 8712).